The chain runs to 226 residues: Gap junction beta-2 protein (226 aa).

Residues 2–13 lie within the membrane without spanning it; sequence DWGALQTILGGV. The Cytoplasmic segment spans residues 14–20; the sequence is NKHSTSI. Residues 21–40 traverse the membrane as a helical segment; sequence GKIWLTVLFIFRIMILVVAA. Residues 41–73 lie on the Extracellular side of the membrane; that stretch reads KEVWGDEQADFVCNTLQPGCKNVCYDHYFPISH. Residues Glu42, Gly45, and Glu47 each coordinate Ca(2+). 3 cysteine pairs are disulfide-bonded: Cys53–Cys180, Cys60–Cys174, and Cys64–Cys169. A helical membrane pass occupies residues 74-94; the sequence is IRLWALQLIFVSTPALLVAMH. Residues 95–135 lie on the Cytoplasmic side of the membrane; it reads VAYRRHEKKRKFIKGEIKSEFKDIEEIKTQKVRIEGSLWWT. The helical transmembrane segment at 136-156 threads the bilayer; the sequence is YTSSIFFRVIFEAAFMYVFYV. Topologically, residues 157-189 are extracellular; the sequence is MYDGFSMQRLVKCNAWPCPNTVDCFVSRPTEKT. Residues 190–210 form a helical membrane-spanning segment; it reads VFTVFMIAVSGICILLNVTEL. Residues 211-226 lie on the Cytoplasmic side of the membrane; sequence CYLLIRYCSGRSKKPV.

It belongs to the connexin family. Beta-type (group I) subfamily. A hemichannel or connexon is composed of a hexamer of connexins. A functional gap junction is formed by the apposition of two hemichannels. Forms heteromeric channels with GJB4. Interacts with CNST.

Its subcellular location is the cell membrane. It localises to the cell junction. The protein localises to the gap junction. Its function is as follows. Structural component of gap junctions. Gap junctions are dodecameric channels that connect the cytoplasm of adjoining cells. They are formed by the docking of two hexameric hemichannels, one from each cell membrane. Small molecules and ions diffuse from one cell to a neighboring cell via the central pore. The chain is Gap junction beta-2 protein (GJB2) from Pongo pygmaeus (Bornean orangutan).